Consider the following 449-residue polypeptide: Adenylosuccinate synthetase (449 aa).

Residues 12-18 and 40-42 contribute to the GTP site; these read GDEGKGK and GHT. D13 (proton acceptor) is an active-site residue. 2 residues coordinate Mg(2+): D13 and G40. IMP contacts are provided by residues 13–16, 38–41, T128, R142, Q223, T238, and R302; these read DEGK and NAGH. Catalysis depends on H41, which acts as the Proton donor. 298–304 serves as a coordination point for substrate; sequence TTTGRRR. GTP is bound by residues R304, 330–332, and 412–414; these read KLD and SLG.

Belongs to the adenylosuccinate synthetase family. In terms of assembly, homodimer. The cofactor is Mg(2+).

Its subcellular location is the cytoplasm. The catalysed reaction is IMP + L-aspartate + GTP = N(6)-(1,2-dicarboxyethyl)-AMP + GDP + phosphate + 2 H(+). Its pathway is purine metabolism; AMP biosynthesis via de novo pathway; AMP from IMP: step 1/2. Plays an important role in the de novo pathway of purine nucleotide biosynthesis. Catalyzes the first committed step in the biosynthesis of AMP from IMP. The protein is Adenylosuccinate synthetase of Gloeothece citriformis (strain PCC 7424) (Cyanothece sp. (strain PCC 7424)).